Here is a 901-residue protein sequence, read N- to C-terminus: HTH-type transcriptional regulator MalT (901 aa).

An ATP-binding site is contributed by 39 to 46 (SPAGYGKT). An HTH luxR-type domain is found at 829-894 (ELIRTSPLTQ…DAVQHAQQLL (66 aa)). Positions 853–872 (NEQIAGELAVAATTIKTHIR) form a DNA-binding region, H-T-H motif.

The protein belongs to the MalT family. In terms of assembly, monomer in solution. Oligomerizes to an active state in the presence of the positive effectors ATP and maltotriose.

Activated by ATP and maltotriose, which are both required for DNA binding. Its function is as follows. Positively regulates the transcription of the maltose regulon whose gene products are responsible for uptake and catabolism of malto-oligosaccharides. Specifically binds to the promoter region of its target genes, recognizing a short DNA motif called the MalT box. The protein is HTH-type transcriptional regulator MalT of Salmonella heidelberg (strain SL476).